Reading from the N-terminus, the 304-residue chain is Sulfotransferase 1C3 (304 aa).

56–61 (KSGTTW) provides a ligand contact to 3'-phosphoadenylyl sulfate. 115–117 (KTH) contributes to the substrate binding site. The Proton acceptor role is filled by histidine 117. Residues arginine 139, serine 147, tyrosine 202, 236–241 (TSFDVM), and 264–268 (FMRKG) each bind 3'-phosphoadenylyl sulfate.

The protein belongs to the sulfotransferase 1 family. In terms of tissue distribution, not detectable in any of the tissues tested. As to expression, expressed in the small intestine.

It localises to the cytoplasm. It carries out the reaction an alcohol + 3'-phosphoadenylyl sulfate = an alkyl sulfate + adenosine 3',5'-bisphosphate + H(+). The enzyme catalyses a phenol + 3'-phosphoadenylyl sulfate = an aryl sulfate + adenosine 3',5'-bisphosphate + H(+). The catalysed reaction is lithocholate + 3'-phosphoadenylyl sulfate = lithocholate sulfate + adenosine 3',5'-bisphosphate + H(+). Sulfotransferase that utilizes 3'-phospho-5'-adenylyl sulfate (PAPS) as sulfonate donor. Has sulfotransferase activity towards various substrates, such as bile acids, thyroid hormones and toward xenobiotic compounds such as chloro phenols and hydroxypyrenes. Lithocholic acid appears to be the best substrate among the endogenous compounds tested and 3,3',5,5'-tetrachloro-4,4'-biphenyldiol shows the highest specific activity among the xenobiotic compounds. In terms of biological role, exhibits weak sulphating activity and only toward chloro phenols (pentachlorophenol and 3,3',5,5'-tetrachloro-4,4'-biphenyldiol). The chain is Sulfotransferase 1C3 (SULT1C3) from Homo sapiens (Human).